Consider the following 309-residue polypeptide: Ribonuclease Z (309 aa).

7 residues coordinate Zn(2+): His63, His65, Asp67, His68, His143, Asp213, and His271. The active-site Proton acceptor is the Asp67.

It belongs to the RNase Z family. As to quaternary structure, homodimer. The cofactor is Zn(2+).

It catalyses the reaction Endonucleolytic cleavage of RNA, removing extra 3' nucleotides from tRNA precursor, generating 3' termini of tRNAs. A 3'-hydroxy group is left at the tRNA terminus and a 5'-phosphoryl group is left at the trailer molecule.. Functionally, zinc phosphodiesterase, which displays some tRNA 3'-processing endonuclease activity. Probably involved in tRNA maturation, by removing a 3'-trailer from precursor tRNA. This Phocaeicola vulgatus (strain ATCC 8482 / DSM 1447 / JCM 5826 / CCUG 4940 / NBRC 14291 / NCTC 11154) (Bacteroides vulgatus) protein is Ribonuclease Z.